The following is a 177-amino-acid chain: Adenine phosphoribosyltransferase (177 aa).

This sequence belongs to the purine/pyrimidine phosphoribosyltransferase family. As to quaternary structure, homodimer.

It is found in the cytoplasm. The catalysed reaction is AMP + diphosphate = 5-phospho-alpha-D-ribose 1-diphosphate + adenine. Its pathway is purine metabolism; AMP biosynthesis via salvage pathway; AMP from adenine: step 1/1. Its function is as follows. Catalyzes a salvage reaction resulting in the formation of AMP, that is energically less costly than de novo synthesis. The polypeptide is Adenine phosphoribosyltransferase (Prosthecochloris aestuarii (strain DSM 271 / SK 413)).